The chain runs to 569 residues: Peptide transporter PTR_C (569 aa).

Over residues 1 to 25 (MSQNVDEKVVHDDASVIRSVDRSES) the composition is skewed to basic and acidic residues. The interval 1–43 (MSQNVDEKVVHDDASVIRSVDRSESDSYPDSVSPEGAEPSEEE) is disordered. A helical transmembrane segment spans residues 54-74 (VPLACWLVAIVELAERFSYYG). N-linked (GlcNAc...) asparagine glycosylation is present at Asn-98. 3 consecutive transmembrane segments (helical) span residues 104–124 (ALSY…AWVA), 134–154 (ISIF…TSLP), and 159–179 (NTSL…TGGV). Asn-212 carries N-linked (GlcNAc...) asparagine glycosylation. A run of 8 helical transmembrane segments spans residues 215-235 (IQNV…SVIA), 245-265 (FWAA…ALFL), 322-342 (ALYA…YGQM), 366-386 (IDSI…YPFI), 398-418 (IFWG…LQHF), 444-464 (VALQ…ASIT), 479-499 (SFIM…GIAL), and 510-530 (WTYT…WFLF).

Belongs to the major facilitator superfamily. Proton-dependent oligopeptide transporter (POT/PTR) (TC 2.A.17) family.

The protein localises to the cell membrane. The enzyme catalyses a dipeptide(out) + H(+)(out) = a dipeptide(in) + H(+)(in). It catalyses the reaction an L-amino acid tripeptide(out) + H(+)(out) = an L-amino acid tripeptide(in) + H(+)(in). Peptide transporter that exploits the inwardly directed proton motive force to facilitate the cellular uptake of di/tripeptides. Shows strong uptake specificity towards the dipeptides Tyr-Phe and Leu-Gly and the tripeptide Phe-Gly-Gly, when compared to PTR_A and PTR_B. Also able to import peptide-based antifungals such as the peptide-nucleoside drug nikkomycin Z as well as the glucosamine-6-phosphate synthase inhibitor, L-norvalyl-N3-(4-methoxyfumaroyl)-L-2,3-diaminopropionoic acid (Nva-FMDP). This chain is Peptide transporter PTR_C, found in Candidozyma auris (Yeast).